A 177-amino-acid polypeptide reads, in one-letter code: Inner membrane protein p22 (177 aa).

Residues 1 to 7 lie on the Intravirion side of the membrane; the sequence is MFNIKMT. The helical transmembrane segment at 8-28 threads the bilayer; sequence ISTLLIALIILVIIILVVFLY. Residues 29-177 lie on the Virion surface side of the membrane; it reads YKKQQPPKKV…IALPRNHKHA (149 aa).

This sequence belongs to the asfivirus inner membrane protein p22 family.

It localises to the virion membrane. The protein resides in the host cell membrane. The chain is Inner membrane protein p22 from Ornithodoros (relapsing fever ticks).